The chain runs to 408 residues: Peptidase T (408 aa).

H78 serves as a coordination point for Zn(2+). Residue D80 is part of the active site. D141 is a Zn(2+) binding site. E175 functions as the Proton acceptor in the catalytic mechanism. Residues E176, D198, and H380 each contribute to the Zn(2+) site.

This sequence belongs to the peptidase M20B family. The cofactor is Zn(2+).

The protein resides in the cytoplasm. It catalyses the reaction Release of the N-terminal residue from a tripeptide.. In terms of biological role, cleaves the N-terminal amino acid of tripeptides. The protein is Peptidase T of Clostridium botulinum (strain Kyoto / Type A2).